A 109-amino-acid chain; its full sequence is MKNYNFILISLFIIFFIILNISSNNNNFTNAEEMTGINDIINRRYQEYMENRTPNEQQQQQQQQQNNNNPPQHIDPLVGNPCNHDQIMQGRISKLKEKLKKDQQNQQQN.

An N-terminal signal peptide occupies residues 1–23; the sequence is MKNYNFILISLFIIFFIILNISS. An N-linked (GlcNAc...) asparagine glycan is attached at asparagine 27. A disordered region spans residues 45–109; it reads YQEYMENRTP…KKDQQNQQQN (65 aa). The segment covering 54–72 has biased composition (low complexity); the sequence is PNEQQQQQQQQQNNNNPPQ. Over residues 94 to 103 the composition is skewed to basic and acidic residues; that stretch reads KLKEKLKKDQ.

Its subcellular location is the secreted. This is an uncharacterized protein from Dictyostelium discoideum (Social amoeba).